A 398-amino-acid polypeptide reads, in one-letter code: Cell adhesion molecule 3 (398 aa).

An N-terminal signal peptide occupies residues 1–24; the sequence is MGAPAASLLLLLLLFACCWAPGGA. The Ig-like V-type domain maps to 25 to 126; that stretch reads NLSQDDSQPW…VRTAKSLVTV (102 aa). Over 25 to 330 the chain is Extracellular; it reads NLSQDDSQPW…PVPSSSSTYH (306 aa). 3 disulfides stabilise this stretch: Cys50–Cys110, Cys152–Cys209, and Cys254–Cys299. 2 consecutive Ig-like C2-type domains span residues 130–228 and 233–315; these read PQKP…QRIE and PTAM…YTLN. An N-linked (GlcNAc...) asparagine glycan is attached at Asn290. A helical transmembrane segment spans residues 331–351; it reads AIIGGIVAFIVFLLLIMLIFL. Over 352–398 the chain is Cytoplasmic; that stretch reads GHYLIRHKGTYLTHEAKGSDDAPDADTAIINAEGGQSGGDDKKEYFI. The disordered stretch occupies residues 367-398; it reads AKGSDDAPDADTAIINAEGGQSGGDDKKEYFI. Residue Ser388 is modified to Phosphoserine.

This sequence belongs to the nectin family. In terms of assembly, homodimer. Can form trans-heterodimers with NECTIN3. Interacts with EPB41L1, DLG3, PALS2 and CASK. In terms of tissue distribution, isoform 1 is expressed mainly in adult and fetal brain. Isoform 2 is highly expressed in adult brain and weakly expressed in placenta. In brain, Isoform 2 is highly expressed in cerebellum.

It is found in the cell membrane. The protein resides in the cell junction. In terms of biological role, involved in cell-cell adhesion. Has both calcium-independent homophilic cell-cell adhesion activity and calcium-independent heterophilic cell-cell adhesion activity with IGSF4, NECTIN1 and NECTIN3. Interaction with EPB41L1 may regulate structure or function of cell-cell junctions. The polypeptide is Cell adhesion molecule 3 (CADM3) (Homo sapiens (Human)).